The primary structure comprises 208 residues: Outer-membrane lipoprotein carrier protein (208 aa).

Positions 1–21 (MRLIRTLFVAALAMGASLAHA) are cleaved as a signal peptide.

It belongs to the LolA family. In terms of assembly, monomer.

Its subcellular location is the periplasm. Its function is as follows. Participates in the translocation of lipoproteins from the inner membrane to the outer membrane. Only forms a complex with a lipoprotein if the residue after the N-terminal Cys is not an aspartate (The Asp acts as a targeting signal to indicate that the lipoprotein should stay in the inner membrane). The sequence is that of Outer-membrane lipoprotein carrier protein from Pseudomonas aeruginosa (strain UCBPP-PA14).